The sequence spans 152 residues: MTPNGKPAIRLSLRAGERIFINGAVLRADRKVSLELLNDATFLLENHVLQPEDTTTPLRQLYFAAQMMLIEPAMREQAHSTFAQMLKGMFSTFKDAEILNALKLVDELVHNGRIFEALKTIRAQYPREAELMGLESPVLPVAATRKSAEANP.

This sequence belongs to the FlbT family.

Its function is as follows. Has a post-transcriptional repressor function in flagellum biogenesis. Associates with the 5'-UTR of fljK mRNA and promotes its degradation. The protein is Probable flagellum biosynthesis repressor protein FlbT of Brucella anthropi (strain ATCC 49188 / DSM 6882 / CCUG 24695 / JCM 21032 / LMG 3331 / NBRC 15819 / NCTC 12168 / Alc 37) (Ochrobactrum anthropi).